Consider the following 94-residue polypeptide: Dynein light chain, cytoplasmic (94 aa).

The protein belongs to the dynein light chain family. Homodimer. Cytoplasmic dynein consists of two catalytic heavy chains (HCs) and a number of non-catalytic subunits which present intermediate chains (ICs), light intermediate chains (LICs) and light chains (LCs). Component of the nuclear pore complex (NPC). The nuclear pore complex constitutes the exclusive means of nucleocytoplasmic transport. NPCs allow the passive diffusion of ions and small molecules and the active, nuclear transport receptor-mediated bidirectional transport of macromolecules such as proteins, RNAs, ribonucleoparticles (RNPs), and ribosomal subunits across the nuclear envelope. Due to its 8-fold rotational symmetry, all subunits are present with 8 copies or multiples thereof.

Its subcellular location is the cytoplasm. It is found in the cytoskeleton. It localises to the nucleus. The protein resides in the nuclear pore complex. Its function is as follows. Acts as one of several non-catalytic accessory components of the cytoplasmic dynein complex that are thought to be involved in linking dynein to cargos and to adapter proteins that regulate dynein function. Cytoplasmic dynein 1 acts as a motor for the intracellular retrograde motility of vesicles and organelles along microtubules. May play a role in changing or maintaining the spatial distribution of cytoskeletal structures. Also a component of the nuclear pore complex. This chain is Dynein light chain, cytoplasmic (nudG), found in Emericella nidulans (strain FGSC A4 / ATCC 38163 / CBS 112.46 / NRRL 194 / M139) (Aspergillus nidulans).